Here is a 590-residue protein sequence, read N- to C-terminus: Cationic amino acid transporter 8, vacuolar (590 aa).

Residues 1 to 85 (MIPASMEEAH…ESENPMRRCL (85 aa)) are Cytoplasmic-facing. Residues 86–106 (TWWDLLWLSFGSVVGSGVFVI) traverse the membrane as a helical segment. Residues 107–114 (TGQEARVG) are Vacuolar-facing. The chain crosses the membrane as a helical span at residues 115 to 135 (AGPAVVLSYAISGVSALLSVL). The Cytoplasmic portion of the chain corresponds to 136 to 160 (CYAEFGVEIPVAGGSFSYLRVELGD). A helical membrane pass occupies residues 161-181 (FIAFIAAGNILLEAMVGAAGL). The Vacuolar segment spans residues 182 to 209 (GRSWSSYLASLVKNDSDYFRIKVDSFAK). N195 carries N-linked (GlcNAc...) asparagine glycosylation. The chain crosses the membrane as a helical span at residues 210-230 (GFDLLDPVAVAVLLVANGIAM). The Cytoplasmic portion of the chain corresponds to 231-238 (TGTKRTSW). Residues 239-259 (LNLITSMVTVCIIVFIVVVGF) form a helical membrane-spanning segment. Topologically, residues 260–266 (THSKTSN) are vacuolar. A helical membrane pass occupies residues 267 to 287 (LVPFFPYGAKGVVQSAAVVYW). At 288–310 (SYTGFDMVANMAEETEKPSRDIP) the chain is on the cytoplasmic side. A helical membrane pass occupies residues 311-331 (IGLVGSMSMITVVYCLMALAL). The Vacuolar portion of the chain corresponds to 332-359 (TMMVKYTEIDANAAYSVAFAQIGMKWAK). The helical transmembrane segment at 360–380 (YLVGICALKGMTTSLLVGSLG) threads the bilayer. Residues 381–407 (QARYTTQIARSHMIPPWFALVHPKTGT) lie on the Cytoplasmic side of the membrane. Residues 408–428 (PIYATLLVTILSSIISFFTSL) form a helical membrane-spanning segment. Residue E429 is a topological domain, vacuolar. Residues 430–450 (VLSSVFSFATLFIFMLVAVAL) traverse the membrane as a helical segment. The Cytoplasmic portion of the chain corresponds to 451 to 465 (LVRRYYVKDVTPEAG). Residues 466 to 486 (LLKFLGFLFLIIASSIGVSAL) traverse the membrane as a helical segment. Residues 487-493 (WNSGVKG) lie on the Vacuolar side of the membrane. Residues 494 to 514 (WIAYTVTGVIWFIGTLGLALL) form a helical membrane-spanning segment. Over 515–522 (PKYRVPKV) the chain is Cytoplasmic. The chain crosses the membrane as a helical span at residues 523–543 (WGVPLVPWLPSFSIAMNLFLI). Residues 544-553 (GSLGYVAFLR) are Vacuolar-facing. The helical transmembrane segment at 554-574 (FIICTMVMLLYYLFVGLHATY) threads the bilayer. At 575 to 590 (DVAHQPLEEAKFEGER) the chain is on the cytoplasmic side.

Belongs to the amino acid-polyamine-organocation (APC) superfamily. Cationic amino acid transporter (CAT) (TC 2.A.3.3) family. In terms of tissue distribution, expressed in roots, stems, flowers and leaves. Mostly present in young and rapidly dividing tissues such as the shoot and root apical meristem, and in young leaves and petioles during seedling development.

It localises to the cell membrane. In terms of biological role, permease involved in the transport of the cationic neutral or acidic amino acids. This Arabidopsis thaliana (Mouse-ear cress) protein is Cationic amino acid transporter 8, vacuolar (CAT8).